The primary structure comprises 366 residues: Chorismate synthase (366 aa).

NADP(+) contacts are provided by Arg48 and Arg54. Residues 125–127 (RSS), 238–239 (NA), Gly278, 293–297 (KPTSS), and Arg319 each bind FMN.

The protein belongs to the chorismate synthase family. As to quaternary structure, homotetramer. Requires FMNH2 as cofactor.

It catalyses the reaction 5-O-(1-carboxyvinyl)-3-phosphoshikimate = chorismate + phosphate. It functions in the pathway metabolic intermediate biosynthesis; chorismate biosynthesis; chorismate from D-erythrose 4-phosphate and phosphoenolpyruvate: step 7/7. Catalyzes the anti-1,4-elimination of the C-3 phosphate and the C-6 proR hydrogen from 5-enolpyruvylshikimate-3-phosphate (EPSP) to yield chorismate, which is the branch point compound that serves as the starting substrate for the three terminal pathways of aromatic amino acid biosynthesis. This reaction introduces a second double bond into the aromatic ring system. The polypeptide is Chorismate synthase (Dechloromonas aromatica (strain RCB)).